The chain runs to 534 residues: CD276 antigen (534 aa).

An N-terminal signal peptide occupies residues 1–28 (MLRRRGSPGMGVHVGAALGALWFCLTGA). Positions 29-139 (LEVQVPEDPV…GSAAVSLQVA (111 aa)) constitute an Ig-like V-type 1 domain. The Extracellular portion of the chain corresponds to 29–466 (LEVQVPEDPV…GQPMTFPPEA (438 aa)). 4 disulfide bridges follow: C50/C122, C165/C220, C268/C340, and C383/C438. N-linked (GlcNAc...) asparagine glycans are attached at residues N104, N189, N215, N322, N407, and N433. In terms of domain architecture, Ig-like C2-type 1 spans 145–238 (PSMTLEPNKD…QDAHSSVTIT (94 aa)). The Ig-like V-type 2 domain maps to 243–357 (PTGAVEVQVP…GSAAVSLQVA (115 aa)). In terms of domain architecture, Ig-like C2-type 2 spans 363–456 (PSMTLEPNKD…QDAHGSVTIT (94 aa)). Residues 467–487 (LWVTVGLSVCLIALLVALAFV) traverse the membrane as a helical segment. Residues 488–534 (CWRKIKQSCEEENAGAEDQDGEGEGSKTALQPLKHSDSKEDDGQEIA) are Cytoplasmic-facing. Residues 498-510 (EENAGAEDQDGEG) are compositionally biased toward acidic residues. The disordered stretch occupies residues 498–534 (EENAGAEDQDGEGEGSKTALQPLKHSDSKEDDGQEIA). Position 525 is a phosphoserine (S525).

Belongs to the immunoglobulin superfamily. BTN/MOG family. Interacts with TREML2 and this interaction enhances T-cell activation. As to expression, ubiquitous but not detectable in peripheral blood lymphocytes or granulocytes. Weakly expressed in resting monocytes. Expressed in dendritic cells derived from monocytes. Expressed in epithelial cells of sinonasal tissue. Expressed in extravillous trophoblast cells and Hofbauer cells of the first trimester placenta and term placenta.

It localises to the membrane. May participate in the regulation of T-cell-mediated immune response. May play a protective role in tumor cells by inhibiting natural-killer mediated cell lysis as well as a role of marker for detection of neuroblastoma cells. May be involved in the development of acute and chronic transplant rejection and in the regulation of lymphocytic activity at mucosal surfaces. Could also play a key role in providing the placenta and fetus with a suitable immunological environment throughout pregnancy. Both isoform 1 and isoform 2 appear to be redundant in their ability to modulate CD4 T-cell responses. Isoform 2 is shown to enhance the induction of cytotoxic T-cells and selectively stimulates interferon gamma production in the presence of T-cell receptor signaling. The chain is CD276 antigen (CD276) from Homo sapiens (Human).